The sequence spans 482 residues: UDP-sulfoquinovose synthase, chloroplastic (482 aa).

The N-terminal 61 residues, 1 to 61 (MAHLLSTSCS…NNTQKLTVVR (61 aa)), are a transit peptide targeting the chloroplast. NAD(+) is bound by residues 100–101 (YC), 120–124 (DNLVR), 163–164 (DI), arginine 189, and asparagine 207. Position 189 (arginine 189) interacts with substrate. Positions 233 and 270 each coordinate substrate. Threonine 233 is a catalytic residue. 2 residues coordinate NAD(+): tyrosine 270 and lysine 274. Catalysis depends on tyrosine 270, which acts as the Proton acceptor. Residue lysine 274 is part of the active site. Position 297 (glutamine 297) interacts with substrate. Valine 300 contacts NAD(+). Substrate is bound by residues 327-330 (ALNR), 342-344 (TVY), and 415-417 (RVE).

The protein belongs to the NAD(P)-dependent epimerase/dehydratase family. In terms of assembly, homodimer. Interacts with FdGOGAT (via FMN-binding domain). NAD(+) serves as cofactor. The N-terminus is blocked.

It is found in the plastid. The protein localises to the chloroplast stroma. It catalyses the reaction sulfite + UDP-alpha-D-glucose + H(+) = UDP-alpha-D-6-sulfoquinovose + H2O. Its function is as follows. Involved in the biosynthesis of sulfolipids found in thylakoid membranes. Converts UDP-glucose and sulfite to the sulfolipid head group precursor UDP-sulfoquinovose. The sulfite is delivered to the reaction center by the FMN-binding domain of FdGOGAT. This Spinacia oleracea (Spinach) protein is UDP-sulfoquinovose synthase, chloroplastic (SQD1).